We begin with the raw amino-acid sequence, 126 residues long: Phosphoribosyl-AMP cyclohydrolase (126 aa).

Position 77 (aspartate 77) interacts with Mg(2+). Cysteine 78 is a Zn(2+) binding site. Mg(2+) contacts are provided by aspartate 79 and aspartate 81. Zn(2+)-binding residues include cysteine 95 and cysteine 102.

This sequence belongs to the PRA-CH family. In terms of assembly, homodimer. It depends on Mg(2+) as a cofactor. The cofactor is Zn(2+).

The protein localises to the cytoplasm. The catalysed reaction is 1-(5-phospho-beta-D-ribosyl)-5'-AMP + H2O = 1-(5-phospho-beta-D-ribosyl)-5-[(5-phospho-beta-D-ribosylamino)methylideneamino]imidazole-4-carboxamide. The protein operates within amino-acid biosynthesis; L-histidine biosynthesis; L-histidine from 5-phospho-alpha-D-ribose 1-diphosphate: step 3/9. Catalyzes the hydrolysis of the adenine ring of phosphoribosyl-AMP. This is Phosphoribosyl-AMP cyclohydrolase from Cellvibrio japonicus (strain Ueda107) (Pseudomonas fluorescens subsp. cellulosa).